Here is a 178-residue protein sequence, read N- to C-terminus: Putative pre-16S rRNA nuclease (178 aa).

2 stretches are compositionally biased toward basic and acidic residues: residues Met-1–Arg-18 and Pro-50–Pro-60. Disordered stretches follow at residues Met-1–Gly-23 and Ser-36–Pro-60.

Belongs to the YqgF nuclease family.

The protein localises to the cytoplasm. In terms of biological role, could be a nuclease involved in processing of the 5'-end of pre-16S rRNA. This Rhodococcus opacus (strain B4) protein is Putative pre-16S rRNA nuclease.